Here is an 872-residue protein sequence, read N- to C-terminus: Alanine--tRNA ligase (872 aa).

Zn(2+) contacts are provided by H567, H571, C669, and H673.

Belongs to the class-II aminoacyl-tRNA synthetase family. The cofactor is Zn(2+).

It is found in the cytoplasm. The catalysed reaction is tRNA(Ala) + L-alanine + ATP = L-alanyl-tRNA(Ala) + AMP + diphosphate. Functionally, catalyzes the attachment of alanine to tRNA(Ala) in a two-step reaction: alanine is first activated by ATP to form Ala-AMP and then transferred to the acceptor end of tRNA(Ala). Also edits incorrectly charged Ser-tRNA(Ala) and Gly-tRNA(Ala) via its editing domain. The polypeptide is Alanine--tRNA ligase (Streptococcus pyogenes serotype M4 (strain MGAS10750)).